Consider the following 442-residue polypeptide: Serine hydroxymethyltransferase (442 aa).

Residues Tyr-54, 100–102, and His-236 each bind pyridoxal 5'-phosphate; that span reads SGS. The cysteines at positions 125 and 364 are disulfide-linked. N6-(pyridoxal phosphate)lysine is present on Lys-237. Position 272 (Gly-272) interacts with pyridoxal 5'-phosphate.

This sequence belongs to the SHMT family. As to quaternary structure, homodimer. It depends on pyridoxal 5'-phosphate as a cofactor.

It localises to the cytoplasm. The protein resides in the mitochondrion matrix. Its subcellular location is the plastid. It is found in the apicoplast. The protein localises to the nucleus. The enzyme catalyses (6R)-5,10-methylene-5,6,7,8-tetrahydrofolate + glycine + H2O = (6S)-5,6,7,8-tetrahydrofolate + L-serine. It participates in one-carbon metabolism; tetrahydrofolate interconversion. With respect to regulation, redox regulation; active in reducing conditions, inactive in oxidizing conditions. The reduction of the cysteine pairs allows the access binding of the tetrahydrofolate substrate to its binding site. This mechanism appears to be unique to Plasmodium species. In terms of biological role, catalyzes the interconversion of serine to glycine accompanied with the production of 5,10-methylenetetrahydrofolate, a source of one-carbon units used by thymidylate synthase to convert dUMP to dTMP for DNA synthesis. Binds to its own mRNA and to the mRNA of bifunctional dihydrofolate reductase-thymidylate synthase (DHFR-TS) in vitro; the physiological relevance of this interaction is not clear. The chain is Serine hydroxymethyltransferase from Plasmodium falciparum (isolate 3D7).